The chain runs to 165 residues: Crossover junction endodeoxyribonuclease RuvC (165 aa).

Residues Asp-8, Glu-67, and Asp-139 contribute to the active site. Mg(2+) contacts are provided by Asp-8, Glu-67, and Asp-139.

The protein belongs to the RuvC family. In terms of assembly, homodimer which binds Holliday junction (HJ) DNA. The HJ becomes 2-fold symmetrical on binding to RuvC with unstacked arms; it has a different conformation from HJ DNA in complex with RuvA. In the full resolvosome a probable DNA-RuvA(4)-RuvB(12)-RuvC(2) complex forms which resolves the HJ. The cofactor is Mg(2+).

It localises to the cytoplasm. It carries out the reaction Endonucleolytic cleavage at a junction such as a reciprocal single-stranded crossover between two homologous DNA duplexes (Holliday junction).. In terms of biological role, the RuvA-RuvB-RuvC complex processes Holliday junction (HJ) DNA during genetic recombination and DNA repair. Endonuclease that resolves HJ intermediates. Cleaves cruciform DNA by making single-stranded nicks across the HJ at symmetrical positions within the homologous arms, yielding a 5'-phosphate and a 3'-hydroxyl group; requires a central core of homology in the junction. The consensus cleavage sequence is 5'-(A/T)TT(C/G)-3'. Cleavage occurs on the 3'-side of the TT dinucleotide at the point of strand exchange. HJ branch migration catalyzed by RuvA-RuvB allows RuvC to scan DNA until it finds its consensus sequence, where it cleaves and resolves the cruciform DNA. The chain is Crossover junction endodeoxyribonuclease RuvC from Alkalilimnicola ehrlichii (strain ATCC BAA-1101 / DSM 17681 / MLHE-1).